Reading from the N-terminus, the 28-residue chain is Ranatuerin-2LT (28 aa).

Cys23 and Cys28 are disulfide-bonded.

As to expression, expressed by the skin glands.

It localises to the secreted. In terms of biological role, has antibacterial activity. The chain is Ranatuerin-2LT from Rana latastei (Italian agile frog).